A 3011-amino-acid polypeptide reads, in one-letter code: Chromodomain-helicase-DNA-binding protein 7 (3011 aa).

Disordered regions lie at residues 90–146 (ISNA…SMWG), 159–189 (PYQQQQQQPQPTQPPQAPSGPPGQGHPQHMQ), 202–422 (MQQH…GSAG), 502–806 (QQLP…VEKI), and 941–960 (PEMERVERPPADDWKKSESS). Over residues 159–168 (PYQQQQQQPQ) the composition is skewed to low complexity. A compositionally biased stretch (pro residues) spans 169–179 (PTQPPQAPSGP). Low complexity predominate over residues 203–215 (QQHGQPQQQRMNQ). 4 stretches are compositionally biased toward polar residues: residues 216–227 (FSQGQEGLNQGN), 241–258 (VPQQNPSMAPSLRHSVQQ), 291–347 (QTLN…NQSV), and 374–393 (GSLNQMNTQTMHPSQPQGTY). The segment covering 502–516 (QQLPSQQQSFQQQMP) has biased composition (low complexity). Polar residues-rich tracts occupy residues 576 to 586 (TQVSGPNTQLV) and 630 to 641 (DSQNLSRNSVDC). Basic and acidic residues-rich tracts occupy residues 655 to 684 (KKEPKDPKEPKEKKEPKTPKVPKTPKEPKE) and 718 to 730 (KGKEGSENSDLDK). The span at 747-759 (QKRRSSRQVKRKR) shows a compositional bias: basic residues. The segment covering 760–770 (YTEDLEFKISD) has biased composition (basic and acidic residues). The segment covering 783–795 (SPSNTSQSEQQES) has biased composition (polar residues). Chromo domains are found at residues 801–868 (PVVE…GQNK) and 883–948 (VEID…RVER). One can recognise a Helicase ATP-binding domain in the interval 981 to 1155 (LFNWYNTRNC…FSLLHFLEPG (175 aa)). ATP is bound at residue 994–1001 (DEMGLGKT). The short motif at 1106–1109 (DEAH) is the DEAH box element. The Helicase C-terminal domain occupies 1295 to 1465 (LIDKLLPKLK…LSKKEIEDLL (171 aa)). Disordered regions lie at residues 1577-1602 (FSDLESDSEEKPSTKPRRPQDKSQGY), 1836-1869 (GTDMLADGGDGGEFDREDEDPEYKPTRTPFKDEI), and 2136-2291 (GTGN…GFYM). Residues 1585–1597 (EEKPSTKPRRPQD) are compositionally biased toward basic and acidic residues. Residues 1845–1856 (DGGEFDREDEDP) are compositionally biased toward acidic residues. Basic and acidic residues predominate over residues 1857-1867 (EYKPTRTPFKD). Over residues 2136–2145 (GTGNANTVSS) the composition is skewed to polar residues. Composition is skewed to basic and acidic residues over residues 2166-2207 (QEEK…KQDC) and 2218-2238 (CELKDIEMSTDVDPKSISEKG). The segment covering 2239–2253 (SEEDEEEKLDDDDKS) has biased composition (acidic residues). A coiled-coil region spans residues 2403 to 2433 (RRRRRKIEIEAERAAKRRNLMEMVAQLRESQ). Phosphoserine is present on Ser2561. 2 disordered regions span residues 2825–2900 (TTGN…LPTN) and 2946–3011 (GSNE…ENDE). A compositionally biased stretch (basic and acidic residues) spans 2841–2851 (GASKAEEKKNE). A compositionally biased stretch (polar residues) spans 2864–2877 (DTVSATDSANGSVS). The span at 2878–2893 (AATAATTATATTTTTT) shows a compositional bias: low complexity. Residues 2948–2964 (NEEKATDKTEGTAFKDE) show a composition bias toward basic and acidic residues. 2 stretches are compositionally biased toward acidic residues: residues 2965–2974 (ENLEGSDAEE) and 2984–3011 (ILEDEIAQGEELDSLDGGEEIENNENDE).

This sequence belongs to the SNF2/RAD54 helicase family. In terms of tissue distribution, expressed in the neural epithelium, otic placodes, optic placodes, branchial arches, and the olfactory placodes,.

The protein resides in the nucleus. The enzyme catalyses ATP + H2O = ADP + phosphate + H(+). Its function is as follows. ATP-dependent chromatin-remodeling factor, slides nucleosomes along DNA; nucleosome sliding requires ATP.Probable transcription regulator. Maybe involved in the in 45S precursor rRNA production. The sequence is that of Chromodomain-helicase-DNA-binding protein 7 (CHD7) from Gallus gallus (Chicken).